We begin with the raw amino-acid sequence, 285 residues long: RNA 5'-monophosphate methyltransferase (285 aa).

S-adenosyl-L-methionine-binding positions include Arg-46, Asn-77, Asp-111, 136-137, and Met-165; that span reads DI. In terms of domain architecture, Bin3-type SAM spans 53–275; the sequence is ELLRQLFPPE…KHTHETQAIP (223 aa).

The protein belongs to the methyltransferase superfamily. In terms of assembly, interacts with DICER1; the interaction may be mediated by RNA.

It localises to the cytoplasm. The enzyme catalyses a 5'-end 5'-phospho-ribonucleoside-RNA + S-adenosyl-L-methionine = a 5'-end (5'-methylphospho)-ribonucleoside-RNA + S-adenosyl-L-homocysteine. It catalyses the reaction a 5'-end 5'-phospho-ribonucleoside-RNA + 2 S-adenosyl-L-methionine = a 5'-end (5'-bismethylphospho)-ribonucleoside-RNA + 2 S-adenosyl-L-homocysteine. Its function is as follows. O-methyltransferase that specifically monomethylates 5'-monophosphate of cytoplasmic histidyl tRNA (tRNA(His)), acting as a capping enzyme by protecting tRNA(His) from cleavage by DICER1. Also able, with less efficiently, to methylate the 5' monophosphate of a subset of pre-miRNAs, acting as a negative regulator of miRNA processing. The 5' monophosphate of pre-miRNAs is recognized by DICER1 and is required for pre-miRNAs processing: methylation at this position reduces the processing of pre-miRNAs by DICER1. Was also reported to mediate dimethylation of pre-miR-145; however dimethylation cannot be reproduced by another group which observes a monomethylation of pre-miR-145. The sequence is that of RNA 5'-monophosphate methyltransferase from Mus musculus (Mouse).